Here is a 662-residue protein sequence, read N- to C-terminus: Glycogen debranching enzyme (662 aa).

The active-site Nucleophile is the Asp338. Glu373 functions as the Proton donor in the catalytic mechanism.

It belongs to the glycosyl hydrolase 13 family.

It carries out the reaction Hydrolysis of (1-&gt;6)-alpha-D-glucosidic linkages to branches with degrees of polymerization of three or four glucose residues in limit dextrin.. It participates in glycan degradation; glycogen degradation. In terms of biological role, removes maltotriose and maltotetraose chains that are attached by 1,6-alpha-linkage to the limit dextrin main chain, generating a debranched limit dextrin. This Yersinia pseudotuberculosis serotype O:1b (strain IP 31758) protein is Glycogen debranching enzyme.